We begin with the raw amino-acid sequence, 165 residues long: Small ribosomal subunit protein bS16 (165 aa).

Residues 110–165 form a disordered region; sequence LSEANNGPTAEAITEKKKKAREDKEAKEAAEKAAAEKAAAAESEEAPAEEAAAEEA. Residues 129 to 144 show a composition bias toward basic and acidic residues; the sequence is AREDKEAKEAAEKAAA. Over residues 151-165 the composition is skewed to acidic residues; sequence ESEEAPAEEAAAEEA.

This sequence belongs to the bacterial ribosomal protein bS16 family.

The chain is Small ribosomal subunit protein bS16 from Corynebacterium glutamicum (strain R).